A 62-amino-acid polypeptide reads, in one-letter code: MANIGIFFGTDTGKTRKIAKMIHKQLGELADAPVNINRTTLDDFMAYPVLLLGTPTLGDGQL.

The region spanning 4-62 (IGIFFGTDTGKTRKIAKMIHKQLGELADAPVNINRTTLDDFMAYPVLLLGTPTLGDGQL) is the Flavodoxin-like domain.

This sequence belongs to the flavodoxin family. Requires FMN as cofactor.

Low-potential electron donor to a number of redox enzymes. NifF is the electron donor to nitrogenase. In Klebsiella oxytoca, this protein is Flavodoxin (nifF).